A 251-amino-acid polypeptide reads, in one-letter code: uncharacterized protein (251 aa).

The protein localises to the mitochondrion. This is an uncharacterized protein from Arabidopsis thaliana (Mouse-ear cress).